Reading from the N-terminus, the 40-residue chain is Photosystem II reaction center protein J (40 aa).

Residues isoleucine 8–phenylalanine 28 form a helical membrane-spanning segment.

Belongs to the PsbJ family. As to quaternary structure, PSII is composed of 1 copy each of membrane proteins PsbA, PsbB, PsbC, PsbD, PsbE, PsbF, PsbH, PsbI, PsbJ, PsbK, PsbL, PsbM, PsbT, PsbX, PsbY, PsbZ, Psb30/Ycf12, at least 3 peripheral proteins of the oxygen-evolving complex and a large number of cofactors. It forms dimeric complexes.

It localises to the plastid. The protein localises to the chloroplast thylakoid membrane. Its function is as follows. One of the components of the core complex of photosystem II (PSII). PSII is a light-driven water:plastoquinone oxidoreductase that uses light energy to abstract electrons from H(2)O, generating O(2) and a proton gradient subsequently used for ATP formation. It consists of a core antenna complex that captures photons, and an electron transfer chain that converts photonic excitation into a charge separation. This chain is Photosystem II reaction center protein J, found in Secale cereale (Rye).